The primary structure comprises 293 residues: N-acetylmannosamine kinase (293 aa).

ATP-binding positions include A5–K12 and G133–I140. Zn(2+) is bound by residues H157, C167, C169, and C174.

This sequence belongs to the ROK (NagC/XylR) family. NanK subfamily. In terms of assembly, homodimer.

The enzyme catalyses an N-acyl-D-mannosamine + ATP = an N-acyl-D-mannosamine 6-phosphate + ADP + H(+). It participates in amino-sugar metabolism; N-acetylneuraminate degradation; D-fructose 6-phosphate from N-acetylneuraminate: step 2/5. Functionally, catalyzes the phosphorylation of N-acetylmannosamine (ManNAc) to ManNAc-6-P. The polypeptide is N-acetylmannosamine kinase (Vibrio vulnificus (strain CMCP6)).